We begin with the raw amino-acid sequence, 447 residues long: N-succinylarginine dihydrolase (447 aa).

Residues 19–28, Asn-110, and 137–138 contribute to the substrate site; these read AGLSFGNEAS and HR. Residue Glu-174 is part of the active site. Arg-212 provides a ligand contact to substrate. His-248 is an active-site residue. Residues Asp-250 and Asn-359 each coordinate substrate. Cys-365 (nucleophile) is an active-site residue.

It belongs to the succinylarginine dihydrolase family. As to quaternary structure, homodimer.

It catalyses the reaction N(2)-succinyl-L-arginine + 2 H2O + 2 H(+) = N(2)-succinyl-L-ornithine + 2 NH4(+) + CO2. It participates in amino-acid degradation; L-arginine degradation via AST pathway; L-glutamate and succinate from L-arginine: step 2/5. In terms of biological role, catalyzes the hydrolysis of N(2)-succinylarginine into N(2)-succinylornithine, ammonia and CO(2). The polypeptide is N-succinylarginine dihydrolase (Salmonella typhi).